The following is a 753-amino-acid chain: Rsm22-cox11 tandem protein 2, mitochondrial (753 aa).

A mitochondrion-targeting transit peptide spans 1 to 39 (MPILTCRYKILFLYNLRNCFTFQNQRCLIPYGTTTTIRW). 4 residues coordinate [4Fe-4S] cluster: Cys323, Cys329, Cys342, and Cys430. A helical membrane pass occupies residues 571–591 (IYYLVAISIFALGLTYAAVPL). The Mitochondrial intermembrane portion of the chain corresponds to 592–753 (YRLFCSKTGY…TNGNLLTKLN (162 aa)).

This sequence in the N-terminal section; belongs to the methyltransferase superfamily. Rsm22 family. The protein in the C-terminal section; belongs to the COX11/CtaG family. In terms of assembly, associates with the mitochondrial ribosome (mitoribosome). Only transiently interacts with the mitoribosome. Specific enzymatic cleavages in vivo by mitochondrial processing peptidase (MPP) yield mature proteins including rsm22-2 and cox11-2.

It localises to the mitochondrion. The protein resides in the mitochondrion inner membrane. Mitochondrial ribosome (mitoribosome) assembly factor. Binds at the interface of the head and body domains of the mitochondrial small ribosomal subunit (mt-SSU), occluding the mRNA channel and preventing compaction of the head domain towards the body. Probable inactive methyltransferase: retains the characteristic folding and ability to bind S-adenosyl-L-methionine, but it probably lost its methyltransferase activity. In terms of biological role, exerts its effect at some terminal stage of cytochrome c oxidase synthesis, probably by being involved in the insertion of the copper B into subunit I. The chain is Rsm22-cox11 tandem protein 2, mitochondrial (cox1102) from Schizosaccharomyces pombe (strain 972 / ATCC 24843) (Fission yeast).